The following is a 77-amino-acid chain: MADALERVTKIIVDRLGVDEADVTLEASFKEDLGADSLDVVELVMELEDEFDMEISDEDAEKIATVGDAVNYINSKQ.

Positions 2–77 (ADALERVTKI…DAVNYINSKQ (76 aa)) constitute a Carrier domain. The residue at position 37 (Ser-37) is an O-(pantetheine 4'-phosphoryl)serine.

The protein belongs to the acyl carrier protein (ACP) family. In terms of processing, 4'-phosphopantetheine is transferred from CoA to a specific serine of apo-ACP by AcpS. This modification is essential for activity because fatty acids are bound in thioester linkage to the sulfhydryl of the prosthetic group.

The protein resides in the cytoplasm. It participates in lipid metabolism; fatty acid biosynthesis. Carrier of the growing fatty acid chain in fatty acid biosynthesis. The polypeptide is Acyl carrier protein (Bacillus licheniformis (strain ATCC 14580 / DSM 13 / JCM 2505 / CCUG 7422 / NBRC 12200 / NCIMB 9375 / NCTC 10341 / NRRL NRS-1264 / Gibson 46)).